Consider the following 469-residue polypeptide: MDHQAHGAGEKKGIMEKIKEKLPGGHGDHKETAGAHGHAGTVTHGAPATGGAYGQEGHTGTTGTGLHGAHAGEKKGVMENIKDKLPGGHADHQQTGGTYGQQGHTGTATHGTLATGGTYGQQGHTGTAMHGTPATNGTYGEHGHTGTATGGSYGEQRHTGVTGTGTHDIGEKKSLMENIKEKLPGGHGDNQQTAGTYGQQGHFATGTHGTPATGGTYGEQGHAGVTGTGTHGTGEKKGLMENIKDKLPGGHGDHQQTGGTYGQQGHTGAATHGTPAGGGTYEQHGHTGMTGTGTHGTGGKKGVMENIKDKLPGGHSDNQQTGGAYEQQGHTGAATHGTPASGGTYEQHGHTGMTGTGTHGTGEKKAVMENIKDKLPGGHGDHQQTGGAYGQQGHTGTATHGTPAGGGTYEQHGNTGMTGTETHGTTATGGTHGQHGHTGTTGTGTHGTDGVGEKKSLMDKIKDKLPGQH.

21 consecutive repeat copies span residues 9–31 (GEKK…DHKE), 49–62 (TGGA…TGTT), 72–94 (GEKK…DHQQ), 95–108 (TGGT…TGTA), 115–128 (TGGT…TGTA), 135–148 (TNGT…TGTA), 149–162 (TGGS…TGVT), 170–192 (GEKK…DNQQ), 193–206 (TAGT…FATG), 213–226 (TGGT…AGVT), 234–256 (GEKK…DHQQ), 257–270 (TGGT…TGAA), 277–290 (GGGT…TGMT), 298–320 (GGKK…DNQQ), 321–334 (TGGA…TGAA), 341–354 (SGGT…TGMT), 362–384 (GEKK…DHQQ), 385–398 (TGGA…TGTA), 405–418 (GGGT…TGMT), 428–441 (TGGT…TGTT), and 452–469 (GEKK…PGQH). A 7 X 23 AA approximate repeats region spans residues 9–390 (GEKKGIMEKI…DHQQTGGAYG (382 aa)). The segment at 49–441 (TGGAYGQEGH…HGQHGHTGTT (393 aa)) is 14 X 14 AA approximate repeats. The tract at residues 87-112 (GGHADHQQTGGTYGQQGHTGTATHGT) is disordered. The span at 93-112 (QQTGGTYGQQGHTGTATHGT) shows a compositional bias: low complexity. A compositionally biased stretch (low complexity) spans 203–214 (FATGTHGTPATG). Residues 203-469 (FATGTHGTPA…KIKDKLPGQH (267 aa)) form a disordered region. Basic and acidic residues predominate over residues 233 to 254 (TGEKKGLMENIKDKLPGGHGDH). Over residues 255-274 (QQTGGTYGQQGHTGAATHGT) the composition is skewed to low complexity. Over residues 288–301 (GMTGTGTHGTGGKK) the composition is skewed to gly residues. Residues 302–312 (GVMENIKDKLP) show a composition bias toward basic and acidic residues. Residues 361 to 382 (TGEKKAVMENIKDKLPGGHGDH) show a composition bias toward basic and acidic residues. 2 stretches are compositionally biased toward low complexity: residues 383-402 (QQTG…THGT) and 412-429 (HGNT…TATG). Residues 439-450 (GTTGTGTHGTDG) are compositionally biased toward gly residues. Residues 451–469 (VGEKKSLMDKIKDKLPGQH) are compositionally biased toward basic and acidic residues.

The protein belongs to the plant dehydrin family.

May reduce intracellular freezing damage during winter by hydrogen-bonding to the lattice of the nascent ice crystals, thus modifying the structure and/or propagation of ice crystals. This Triticum aestivum (Wheat) protein is Cold shock protein CS66 (CS66).